A 167-amino-acid chain; its full sequence is Urease accessory protein UreE (167 aa).

It belongs to the UreE family.

It localises to the cytoplasm. Its function is as follows. Involved in urease metallocenter assembly. Binds nickel. Probably functions as a nickel donor during metallocenter assembly. The chain is Urease accessory protein UreE from Pseudomonas aeruginosa (strain UCBPP-PA14).